We begin with the raw amino-acid sequence, 542 residues long: Protein MPA43 (542 aa).

In Saccharomyces cerevisiae (strain ATCC 204508 / S288c) (Baker's yeast), this protein is Protein MPA43 (MPA43).